Consider the following 297-residue polypeptide: MDFPYDLNALFPERISVLDSNLSAGRKAHGRPDPLPQVTTVIDELGKASSKAQQLPAPITSAAKLQANRHHLYLLKDGEQNGGRGVIVGFLKVGYKKLFLLDQRGAHLETEPLCVLDFYVTETLQRHGYGSELFDFMLKHKQVEPAQMAYDRPSPKFLSFLEKRYDLRNSVPQVNNFVVFAGFFQSRSAVQLRKVPPRKPEGEIKPYSLMEREVVREEQRVLPWPFVRPGGPPHSPPLLPSSPQSRSLSVGSSPSRAPLRPAAATVLQQGQTPSSPLNDSCRAKRTSSLNRSRLSFH.

An N-acetyltransferase domain is found at 1 to 184; sequence MDFPYDLNAL…NNFVVFAGFF (184 aa). Residues 118–131 and 154–163 contribute to the acetyl-CoA site; these read FYVT…GYGS and SPKFLSFLEK. The tract at residues 226–297 is disordered; sequence FVRPGGPPHS…SLNRSRLSFH (72 aa). Residues 230 to 240 are compositionally biased toward pro residues; it reads GGPPHSPPLLP. Positions 241–264 are enriched in low complexity; it reads SSPQSRSLSVGSSPSRAPLRPAAA. 2 stretches are compositionally biased toward polar residues: residues 266–278 and 286–297; these read VLQQ…SPLN and TSSLNRSRLSFH.

It belongs to the acetyltransferase ATAT1 family. In terms of assembly, monomer.

It is found in the cytoplasm. The protein localises to the membrane. The protein resides in the clathrin-coated pit. Its subcellular location is the cell junction. It localises to the focal adhesion. It is found in the cell projection. The protein localises to the axon. The protein resides in the cytoskeleton. Its subcellular location is the spindle. The enzyme catalyses L-lysyl-[alpha-tubulin] + acetyl-CoA = N(6)-acetyl-L-lysyl-[alpha-tubulin] + CoA + H(+). In terms of biological role, specifically acetylates 'Lys-40' in alpha-tubulin on the lumenal side of microtubules. Promotes microtubule destabilization and accelerates microtubule dynamics; this activity may be independent of acetylation activity. Acetylates alpha-tubulin with a slow enzymatic rate, due to a catalytic site that is not optimized for acetyl transfer. Enters the microtubule through each end and diffuses quickly throughout the lumen of microtubules. Acetylates only long/old microtubules because of its slow acetylation rate since it does not have time to act on dynamically unstable microtubules before the enzyme is released. May be involved in neuron development. Acetylates alpha-tubulin in neurons, but not in cilia. This is Alpha-tubulin N-acetyltransferase 1 from Danio rerio (Zebrafish).